A 367-amino-acid polypeptide reads, in one-letter code: Phosphoribosylaminoimidazole-succinocarboxamide synthase (367 aa).

Belongs to the SAICAR synthetase family.

The enzyme catalyses 5-amino-1-(5-phospho-D-ribosyl)imidazole-4-carboxylate + L-aspartate + ATP = (2S)-2-[5-amino-1-(5-phospho-beta-D-ribosyl)imidazole-4-carboxamido]succinate + ADP + phosphate + 2 H(+). Its pathway is purine metabolism; IMP biosynthesis via de novo pathway; 5-amino-1-(5-phospho-D-ribosyl)imidazole-4-carboxamide from 5-amino-1-(5-phospho-D-ribosyl)imidazole-4-carboxylate: step 1/2. In Shewanella halifaxensis (strain HAW-EB4), this protein is Phosphoribosylaminoimidazole-succinocarboxamide synthase.